We begin with the raw amino-acid sequence, 666 residues long: Pentatricopeptide repeat-containing protein At1g64100 (666 aa).

PPR repeat units follow at residues 105 to 139 (TAVDCNKVIGVFVRMNRPDVAISLYRKMEIRRIPL), 140 to 174 (NIYSFNILIKCFCDCHKLSFSLSTFGKLTKLGFQP), 175 to 209 (DVVTFNTLLHGLCLEDRISEALALFGYMVETGFLE), 225 to 259 (VVITFNTLINGLCLEGRVLEAAALVNKMVGKGLHI), 260 to 294 (DVVTYGTIVNGMCKMGDTKSALNLLSKMEETHIKP), 295 to 329 (DVVIYSAIIDRLCKDGHHSDAQYLFSEMLEKGIAP), 330 to 364 (NVFTYNCMIDGFCSFGRWSDAQRLLRDMIEREINP), 365 to 399 (DVLTFNALISASVKEGKLFEAEKLCDEMLHRCIFP), 400 to 430 (DTVTYNSMIYGFCKHNRFDDAKHMFDLMASP), 431 to 465 (DVVTFNTIIDVYCRAKRVDEGMQLLREISRRGLVA), 466 to 500 (NTTTYNTLIHGFCEVDNLNAAQDLFQEMISHGVCP), 501 to 535 (DTITCNILLYGFCENEKLEEALELFEVIQMSKIDL), 536 to 570 (DTVAYNIIIHGMCKGSKVDEAWDLFCSLPIHGVEP), 571 to 605 (DVQTYNVMISGFCGKSAISDANVLFHKMKDNGHEP), and 606 to 640 (DNSTYNTLIRGCLKAGEIDKSIELISEMRSNGFSG).

This sequence belongs to the PPR family. P subfamily.

This is Pentatricopeptide repeat-containing protein At1g64100 from Arabidopsis thaliana (Mouse-ear cress).